The primary structure comprises 196 residues: dITP/XTP pyrophosphatase (196 aa).

Residue 7-12 (THNPGK) coordinates substrate. Positions 40 and 69 each coordinate Mg(2+). Asp-69 (proton acceptor) is an active-site residue. Substrate-binding positions include Ser-70, 150 to 153 (FGYD), Lys-173, and 178 to 179 (HR).

The protein belongs to the HAM1 NTPase family. In terms of assembly, homodimer. Requires Mg(2+) as cofactor.

The catalysed reaction is XTP + H2O = XMP + diphosphate + H(+). It carries out the reaction dITP + H2O = dIMP + diphosphate + H(+). The enzyme catalyses ITP + H2O = IMP + diphosphate + H(+). Functionally, pyrophosphatase that catalyzes the hydrolysis of nucleoside triphosphates to their monophosphate derivatives, with a high preference for the non-canonical purine nucleotides XTP (xanthosine triphosphate), dITP (deoxyinosine triphosphate) and ITP. Seems to function as a house-cleaning enzyme that removes non-canonical purine nucleotides from the nucleotide pool, thus preventing their incorporation into DNA/RNA and avoiding chromosomal lesions. This is dITP/XTP pyrophosphatase from Exiguobacterium sp. (strain ATCC BAA-1283 / AT1b).